Reading from the N-terminus, the 317-residue chain is Melanocyte-stimulating hormone receptor (317 aa).

At 1–37 the chain is on the extracellular side; it reads MPVQGSQRRLLGSLNSTPTATPHLGLAANQTGARCLE. Asn-29 carries N-linked (GlcNAc...) asparagine glycosylation. Residues 38–63 traverse the membrane as a helical segment; the sequence is VSVPDGLFLSLGLVSLVENVLVVTAI. The Cytoplasmic portion of the chain corresponds to 64–72; that stretch reads AKNRNLHSP. The helical transmembrane segment at 73–93 threads the bilayer; it reads MYCFICCLALSDLLVSGSNML. Topologically, residues 94–118 are extracellular; that stretch reads ETAVTLLLEAGVLAARAAVVQQLDN. The chain crosses the membrane as a helical span at residues 119–140; it reads VIDVITCSSMLSSLCFLGAIAV. Topologically, residues 141-163 are cytoplasmic; sequence DRYISIFYALRYHSIVTLPRARR. The chain crosses the membrane as a helical span at residues 164–183; it reads AVAAIWVASVLFSTLFIAYY. The Extracellular portion of the chain corresponds to 184–191; it reads DHAAVLLC. The helical transmembrane segment at 192-211 threads the bilayer; the sequence is LVIFFLAMLVLMAVLYVHML. Topologically, residues 212-240 are cytoplasmic; the sequence is ARACQHAQGIARLHKRQRLAHQGFGLKGA. The chain crosses the membrane as a helical span at residues 241–266; it reads ATLTILLGIFFLCWGPFFLHLTLIVL. Topologically, residues 267–279 are extracellular; it reads CPQHPTCSCIFKN. Residues 280 to 300 form a helical membrane-spanning segment; sequence FNLFLALIICNAIIDPLIYAF. Over 301–317 the chain is Cytoplasmic; it reads RSQELRRTLKEVLLCSW. A lipid anchor (S-palmitoyl cysteine) is attached at Cys-315.

It belongs to the G-protein coupled receptor 1 family. As to quaternary structure, interacts with MGRN1, but does not undergo MGRN1-mediated ubiquitination; this interaction competes with GNAS-binding and thus inhibits agonist-induced cAMP production. Interacts with OPN3; the interaction results in a decrease in MC1R-mediated cAMP signaling and ultimately a decrease in melanin production in melanocytes.

The protein localises to the cell membrane. Functionally, receptor for MSH (alpha, beta and gamma) and ACTH. The activity of this receptor is mediated by G proteins which activate adenylate cyclase. Mediates melanogenesis, the production of eumelanin (black/brown) and phaeomelanin (red/yellow), via regulation of cAMP signaling in melanocytes. The polypeptide is Melanocyte-stimulating hormone receptor (MC1R) (Papio anubis (Olive baboon)).